The sequence spans 342 residues: Nicotinate-nucleotide--dimethylbenzimidazole phosphoribosyltransferase (342 aa).

Residue Glu-311 is the Proton acceptor of the active site.

The protein belongs to the CobT family.

It carries out the reaction 5,6-dimethylbenzimidazole + nicotinate beta-D-ribonucleotide = alpha-ribazole 5'-phosphate + nicotinate + H(+). It functions in the pathway nucleoside biosynthesis; alpha-ribazole biosynthesis; alpha-ribazole from 5,6-dimethylbenzimidazole: step 1/2. Its function is as follows. Catalyzes the synthesis of alpha-ribazole-5'-phosphate from nicotinate mononucleotide (NAMN) and 5,6-dimethylbenzimidazole (DMB). This is Nicotinate-nucleotide--dimethylbenzimidazole phosphoribosyltransferase from Shewanella loihica (strain ATCC BAA-1088 / PV-4).